Reading from the N-terminus, the 281-residue chain is Probable endonuclease 4 (281 aa).

Residues H69, H109, E145, D179, H182, H216, D229, H231, and E261 each coordinate Zn(2+).

It belongs to the AP endonuclease 2 family. It depends on Zn(2+) as a cofactor.

It catalyses the reaction Endonucleolytic cleavage to 5'-phosphooligonucleotide end-products.. Functionally, endonuclease IV plays a role in DNA repair. It cleaves phosphodiester bonds at apurinic or apyrimidinic (AP) sites, generating a 3'-hydroxyl group and a 5'-terminal sugar phosphate. In Parabacteroides distasonis (strain ATCC 8503 / DSM 20701 / CIP 104284 / JCM 5825 / NCTC 11152), this protein is Probable endonuclease 4.